The chain runs to 730 residues: LisH domain-containing protein ARMC9 (730 aa).

The region spanning 7–39 (HESELLGLVKEYLDFAEFEDTLKTFSKECKVKG) is the LisH domain. Positions 205 to 242 (SNNKEMLQQLHQQLLEAERRAMAYLKRYNKMQADYHSL) form a coiled coil. The residue at position 583 (Ser-583) is a Phosphoserine. The interval 675-730 (QNAQQARNGCPRPIPVAQPDDYKEGKRGVAGRATPSSCKSAECAEPVLSSGAQKPK) is disordered.

As to quaternary structure, interacts with TOGARAM1, CCDC66, CEP104, CSPP1 and CEP290. Interacts with NDUFAF2.

It localises to the cytoplasm. The protein resides in the cytoskeleton. Its subcellular location is the cilium basal body. The protein localises to the cell projection. It is found in the cilium. It localises to the microtubule organizing center. The protein resides in the centrosome. Its subcellular location is the centriole. Involved in ciliogenesis. It is required for appropriate acetylation and polyglutamylation of ciliary microtubules, and regulation of cilium length. Acts as a positive regulator of hedgehog (Hh)signaling. May participate in the trafficking and/or retention of GLI2 and GLI3 proteins at the ciliary tip. The polypeptide is LisH domain-containing protein ARMC9 (Armc9) (Rattus norvegicus (Rat)).